The chain runs to 807 residues: Glycerol-3-phosphate acyltransferase (807 aa).

The short motif at 305–310 is the HXXXXD motif element; that stretch reads CHRSHM.

The protein belongs to the GPAT/DAPAT family.

It is found in the cell inner membrane. It carries out the reaction sn-glycerol 3-phosphate + an acyl-CoA = a 1-acyl-sn-glycero-3-phosphate + CoA. It functions in the pathway phospholipid metabolism; CDP-diacylglycerol biosynthesis; CDP-diacylglycerol from sn-glycerol 3-phosphate: step 1/3. The protein is Glycerol-3-phosphate acyltransferase of Vibrio atlanticus (strain LGP32) (Vibrio splendidus (strain Mel32)).